A 101-amino-acid polypeptide reads, in one-letter code: MIFKRAVSTLIPPKVVSSKNIGSAPNAKRIANVVHFYKSLPQGPAPAIKANTRLARYKAKYFDGDNASGKPLWHFALGIIAFGYSMEYYFHLRHHKGAEEH.

The N-terminal 6 residues, 1–6, are a transit peptide targeting the mitochondrion; that stretch reads MIFKRA.

Belongs to the ATPase F chain family. In terms of assembly, F-type ATPases have 2 components, CF(1) - the catalytic core - and CF(0) - the membrane proton channel. In yeast, the dimeric form of ATP synthase consists of 17 polypeptides: alpha, beta, gamma, delta, epsilon, 4 (B), 5 (OSCP), 6 (A), 8, 9 (C), d, E (Tim11), f, g, h, i/j and k.

The protein localises to the mitochondrion. It localises to the mitochondrion inner membrane. Its function is as follows. Mitochondrial membrane ATP synthase (F(1)F(0) ATP synthase or Complex V) produces ATP from ADP in the presence of a proton gradient across the membrane which is generated by electron transport complexes of the respiratory chain. F-type ATPases consist of two structural domains, F(1) - containing the extramembraneous catalytic core and F(0) - containing the membrane proton channel, linked together by a central stalk and a peripheral stalk. During catalysis, ATP synthesis in the catalytic domain of F(1) is coupled via a rotary mechanism of the central stalk subunits to proton translocation. Part of the complex F(0) domain. Minor subunit located with subunit a in the membrane. The protein is ATP synthase subunit f, mitochondrial (ATP17) of Saccharomyces cerevisiae (strain ATCC 204508 / S288c) (Baker's yeast).